The following is a 139-amino-acid chain: Small ribosomal subunit protein uS12 (139 aa).

The interval 1–21 is disordered; the sequence is MSTVSQLIKKRRSSKTSKTKA. Residues 8–18 are compositionally biased toward basic residues; it reads IKKRRSSKTSK.

This sequence belongs to the universal ribosomal protein uS12 family. Part of the 30S ribosomal subunit. Contacts proteins S8 and S17. May interact with IF1 in the 30S initiation complex.

With S4 and S5 plays an important role in translational accuracy. In terms of biological role, interacts with and stabilizes bases of the 16S rRNA that are involved in tRNA selection in the A site and with the mRNA backbone. Located at the interface of the 30S and 50S subunits, it traverses the body of the 30S subunit contacting proteins on the other side and probably holding the rRNA structure together. The combined cluster of proteins S8, S12 and S17 appears to hold together the shoulder and platform of the 30S subunit. In Onion yellows phytoplasma (strain OY-M), this protein is Small ribosomal subunit protein uS12.